The chain runs to 194 residues: Aminodeoxychorismate/anthranilate synthase component 2 (194 aa).

In terms of domain architecture, Glutamine amidotransferase type-1 spans Met-1–Ala-194. Residues Cys-79, His-168, and Glu-170 contribute to the active site.

Monomer. Heterodimer consisting of two non-identical subunits: a glutamine amidotransferase subunit (PabA) and a aminodeoxychorismate synthase subunit (PabB).

It catalyses the reaction chorismate + L-glutamine = anthranilate + pyruvate + L-glutamate + H(+). The catalysed reaction is chorismate + L-glutamine = 4-amino-4-deoxychorismate + L-glutamate. It functions in the pathway amino-acid biosynthesis; L-tryptophan biosynthesis; L-tryptophan from chorismate: step 1/5. It participates in cofactor biosynthesis; tetrahydrofolate biosynthesis; 4-aminobenzoate from chorismate: step 1/2. Its function is as follows. Part of a heterodimeric complex that catalyzes the two-step biosynthesis of 4-amino-4-deoxychorismate (ADC), a precursor of p-aminobenzoate (PABA) and tetrahydrofolate. In the first step, a glutamine amidotransferase (PabA) generates ammonia as a substrate that, along with chorismate, is used in the second step, catalyzed by aminodeoxychorismate synthase (PabB) to produce ADC. PabA converts glutamine into glutamate only in the presence of stoichiometric amounts of PabB. Also involved in the biosynthesis of anthranilate. Complements a glutamine amidotransferase-negative mutant. This chain is Aminodeoxychorismate/anthranilate synthase component 2, found in Bacillus subtilis (strain 168).